The primary structure comprises 139 residues: MTERTFSIIKPDATRRNLTGAINAVIEAAGLRIVAQRRVKLTEAQAKKFYEVHAERPFYGELVGQMTAEPVVVQVLQGDNAVLKYREVMGATNPENADEGTIRKLFALSIGENSVHGSDSLENAGIEIAQFFTEDEIVG.

Positions 10, 58, 86, 92, 103, and 113 each coordinate ATP. The active-site Pros-phosphohistidine intermediate is His-116.

It belongs to the NDK family. In terms of assembly, homotetramer. Mg(2+) is required as a cofactor.

It is found in the cytoplasm. It carries out the reaction a 2'-deoxyribonucleoside 5'-diphosphate + ATP = a 2'-deoxyribonucleoside 5'-triphosphate + ADP. The enzyme catalyses a ribonucleoside 5'-diphosphate + ATP = a ribonucleoside 5'-triphosphate + ADP. In terms of biological role, major role in the synthesis of nucleoside triphosphates other than ATP. The ATP gamma phosphate is transferred to the NDP beta phosphate via a ping-pong mechanism, using a phosphorylated active-site intermediate. The polypeptide is Nucleoside diphosphate kinase (Caulobacter vibrioides (strain ATCC 19089 / CIP 103742 / CB 15) (Caulobacter crescentus)).